The following is a 607-amino-acid chain: Probable Ufm1-specific protease 2 (607 aa).

Catalysis depends on residues C440, D564, and H566.

The protein belongs to the peptidase C78 family.

Functionally, thiol protease which recognizes and hydrolyzes the peptide bond at the C-terminal Gly of UFM1, a ubiquitin-like modifier protein bound to a number of target proteins. Does not hydrolyze SUMO1 or ISG15 ubiquitin-like proteins. In Drosophila melanogaster (Fruit fly), this protein is Probable Ufm1-specific protease 2.